The primary structure comprises 488 residues: Glutamyl-tRNA(Gln) amidotransferase subunit A (488 aa).

Catalysis depends on charge relay system residues lysine 77 and serine 152. The active-site Acyl-ester intermediate is the serine 176.

It belongs to the amidase family. GatA subfamily. Heterotrimer of A, B and C subunits.

The enzyme catalyses L-glutamyl-tRNA(Gln) + L-glutamine + ATP + H2O = L-glutaminyl-tRNA(Gln) + L-glutamate + ADP + phosphate + H(+). Its function is as follows. Allows the formation of correctly charged Gln-tRNA(Gln) through the transamidation of misacylated Glu-tRNA(Gln) in organisms which lack glutaminyl-tRNA synthetase. The reaction takes place in the presence of glutamine and ATP through an activated gamma-phospho-Glu-tRNA(Gln). The protein is Glutamyl-tRNA(Gln) amidotransferase subunit A of Streptococcus pyogenes serotype M3 (strain ATCC BAA-595 / MGAS315).